Here is a 1092-residue protein sequence, read N- to C-terminus: Probable cellulose synthase A catalytic subunit 6 [UDP-forming] (1092 aa).

Over 1-280 the chain is Cytoplasmic; sequence MEASAGLVAG…SSSRINPYRM (280 aa). Zn(2+) contacts are provided by Cys42, Cys45, Cys61, Cys64, Cys69, Cys72, Cys84, and Cys87. An RING-type; degenerate zinc finger spans residues 42–88; that stretch reads CQICGDDVGEGPDGEPFVACNECAFPVCRNCYDYERREGSQACPQCK. Residues 100–123 are disordered; the sequence is VAGDEEEDGVDDLEGEFGLDGRED. The segment covering 103-116 has biased composition (acidic residues); the sequence is DEEEDGVDDLEGEF. Residues 281-301 traverse the membrane as a helical segment; it reads IIIIRLVVLGFFFHYRVMHPV. At 302 to 303 the chain is on the extracellular side; the sequence is ND. The helical transmembrane segment at 304–324 threads the bilayer; that stretch reads AFALWLISVICEIWFAMSWIL. At 325–868 the chain is on the cytoplasmic side; the sequence is DQFPKWLPIE…FLERFSYINS (544 aa). 4 residues coordinate UDP-alpha-D-glucose: Ser363, Lys369, Glu370, and Asp399. The active site involves Asp399. Residues 453-480 are a coiled coil; that stretch reads VRERRAMKRDYEEFKVRINALVAKAQKV. UDP-alpha-D-glucose is bound at residue Lys540. 2 residues coordinate Mn(2+): Lys541 and Asp565. Residue Asp792 is part of the active site. A helical transmembrane segment spans residues 869 to 889; it reads IVYPWTSIPLLAYCTLPAICL. The Extracellular segment spans residues 890–901; the sequence is LTGKFITPELTN. The helical transmembrane segment at 902-922 threads the bilayer; that stretch reads VASLWFMSLFICIFVTGILEM. Topologically, residues 923–937 are cytoplasmic; the sequence is RWSGVAIDDWWRNEQ. A helical transmembrane segment spans residues 938–958; sequence FWVIGGVSSHLFAVFQGLLKV. At 959–987 the chain is on the extracellular side; that stretch reads LAGVDTSFTVTSKAGDDEEFSELYTFKWT. The chain crosses the membrane as a helical span at residues 988–1008; sequence TLLIPPTTLLLLNFIGVVAGV. The Cytoplasmic segment spans residues 1009-1019; sequence SNAINNGYESW. Residues 1020–1040 form a helical membrane-spanning segment; that stretch reads GPLFGKLFFAFWVIVHLYPFL. The Extracellular portion of the chain corresponds to 1041 to 1049; it reads KGLVGRQNR. Residues 1050 to 1070 traverse the membrane as a helical segment; it reads TPTIVIVWSILLASIFSLLWV. The Cytoplasmic portion of the chain corresponds to 1071–1092; sequence RIDPFLAKNNGPLLEECGLDCN.

The protein belongs to the glycosyltransferase 2 family. Plant cellulose synthase subfamily. Mn(2+) serves as cofactor. The cofactor is Zn(2+).

Its subcellular location is the cell membrane. The catalysed reaction is [(1-&gt;4)-beta-D-glucosyl](n) + UDP-alpha-D-glucose = [(1-&gt;4)-beta-D-glucosyl](n+1) + UDP + H(+). The protein operates within glycan metabolism; plant cellulose biosynthesis. Probable catalytic subunit of cellulose synthase terminal complexes ('rosettes'), required for beta-1,4-glucan microfibril crystallization, a major mechanism of the cell wall formation. The sequence is that of Probable cellulose synthase A catalytic subunit 6 [UDP-forming] (CESA6) from Oryza sativa subsp. japonica (Rice).